The chain runs to 565 residues: FAD-linked oxidoreductase ZEB1 (565 aa).

The first 27 residues, M1 to C27, serve as a signal peptide directing secretion. Residues N46, N82, and N100 are each glycosylated (N-linked (GlcNAc...) asparagine). Residues L115–G293 enclose the FAD-binding PCMH-type domain. N-linked (GlcNAc...) asparagine glycans are attached at residues N340, N352, and N421.

It belongs to the oxygen-dependent FAD-linked oxidoreductase family.

Its pathway is mycotoxin biosynthesis. Its function is as follows. FAD-linked oxidoreductase; part of the gene cluster that mediates the biosynthesis of zearalenone (ZEA), a nonsteroid estrogen that is a contaminant of cereal grains and causes estrogenic disorders in humans and animals. The ZEA backbone is synthesized from a single acetyl-CoA molecule and eight malonyl-CoA molecules. The reducing polyketide synthase ZEA2 is proposed to synthesize a reduced hexaketide intermediate by using different combinations of its reductive domains during each round of condensation. The hexaketide thioester is then transacylated to the non-reducing polyketide synthase ZEA1 and is further condensed with three malonyl-CoAs without reductive tailoring to yield a mixed reduced/unreduced nonaketide. ZEA1 must be able to interact with ZEA2 to facilitate starter-unit acyltransfer and initiate polyketide biosynthesis. ZEA1 also mediates the required C2-C7 cyclization to form the resorcylate core and catalyzes the formation of the macrolactone. ZEB1 is then responsible for the chemical conversion of beta-zearalenonol (beta-ZOL) to ZEA in the biosynthetic pathway. This is FAD-linked oxidoreductase ZEB1 from Gibberella zeae (strain ATCC MYA-4620 / CBS 123657 / FGSC 9075 / NRRL 31084 / PH-1) (Wheat head blight fungus).